Reading from the N-terminus, the 765-residue chain is Putative chloride channel-like protein CLC-g (765 aa).

The next 12 membrane-spanning stretches (helical) occupy residues 67–87 (VFMK…IGFA), 116–136 (FVVF…ITAF), 167–187 (LIIK…IGKA), 190–210 (MVHT…KRYR), 232–252 (GAAA…LFAL), 262–282 (ALLW…RALI), 315–335 (VLPV…YNFL), 355–375 (ILLA…LPFL), 438–458 (FSVL…YGIV), 462–482 (GLFV…GMLL), 494–514 (AVLG…STCV), and 515–535 (ILLE…VLLI). The CBS 1 domain occupies 568-640 (MRQLLVGDVV…LLKKRVFMPS (73 aa)). S646 is modified (phosphoserine). A CBS 2 domain is found at 687–748 (FSNASPYTVV…PEHILGLHPS (62 aa)). The helical transmembrane segment at 715–735 (HLLVIPKTSNRPPVVGILTRH) threads the bilayer.

The protein belongs to the chloride channel (TC 2.A.49) family. As to quaternary structure, homodimer. Interacts with PP2A5.

The protein localises to the membrane. Putative voltage-gated chloride channel. In Arabidopsis thaliana (Mouse-ear cress), this protein is Putative chloride channel-like protein CLC-g (CLC-G).